A 611-amino-acid polypeptide reads, in one-letter code: Aspartate--tRNA(Asp/Asn) ligase (611 aa).

Glu-177 is a binding site for L-aspartate. The interval 201-204 (QLFK) is aspartate. Arg-223 serves as a coordination point for L-aspartate. Residues 223 to 225 (RDE) and Gln-232 each bind ATP. His-461 provides a ligand contact to L-aspartate. Position 499 (Glu-499) interacts with ATP. Arg-506 serves as a coordination point for L-aspartate. 551 to 554 (GVDR) serves as a coordination point for ATP.

Belongs to the class-II aminoacyl-tRNA synthetase family. Type 1 subfamily. Homodimer.

It is found in the cytoplasm. It carries out the reaction tRNA(Asx) + L-aspartate + ATP = L-aspartyl-tRNA(Asx) + AMP + diphosphate. Functionally, aspartyl-tRNA synthetase with relaxed tRNA specificity since it is able to aspartylate not only its cognate tRNA(Asp) but also tRNA(Asn). Reaction proceeds in two steps: L-aspartate is first activated by ATP to form Asp-AMP and then transferred to the acceptor end of tRNA(Asp/Asn). This is Aspartate--tRNA(Asp/Asn) ligase from Synechococcus sp. (strain WH7803).